The chain runs to 250 residues: Homeobox protein DLL-1 (250 aa).

2 disordered regions span residues 40-66 (YPSL…SGSN) and 84-106 (SPYL…PDQQ). Over residues 84-98 (SPYLQSCNSNTTTQS) the composition is skewed to polar residues. A DNA-binding region (homeobox) is located at residues 125-184 (IRKPRTIYSSLQLQALNHRFQQTQYLALPERAELAASLGVTQTQVKIWFQNKRSKYKKLI).

It belongs to the distal-less homeobox family.

Its subcellular location is the nucleus. The sequence is that of Homeobox protein DLL-1 (dll1) from Xenopus laevis (African clawed frog).